Reading from the N-terminus, the 231-residue chain is NADH-ubiquinone oxidoreductase chain 4 (231 aa).

A run of 6 helical transmembrane segments spans residues 1–21, 34–54, 63–85, 89–111, 128–148, and 156–176; these read PIAG…YGII, MFLP…LTCL, IAYS…TPWG, AMTL…NTTY, ILPM…AIPP, and LLIM…LGLS.

This sequence belongs to the complex I subunit 4 family.

It is found in the mitochondrion membrane. It catalyses the reaction a ubiquinone + NADH + 5 H(+)(in) = a ubiquinol + NAD(+) + 4 H(+)(out). Core subunit of the mitochondrial membrane respiratory chain NADH dehydrogenase (Complex I) that is believed to belong to the minimal assembly required for catalysis. Complex I functions in the transfer of electrons from NADH to the respiratory chain. The immediate electron acceptor for the enzyme is believed to be ubiquinone. The polypeptide is NADH-ubiquinone oxidoreductase chain 4 (MT-ND4) (Gloydius intermedius (Central Asian pit viper)).